The chain runs to 393 residues: Chorismate synthase (393 aa).

Residues R40 and R46 each coordinate NADP(+). FMN-binding positions include 129–131, 251–252, G301, 316–320, and R342; these read RAS, QA, and KPIST.

The protein belongs to the chorismate synthase family. As to quaternary structure, homotetramer. FMNH2 serves as cofactor.

It catalyses the reaction 5-O-(1-carboxyvinyl)-3-phosphoshikimate = chorismate + phosphate. It functions in the pathway metabolic intermediate biosynthesis; chorismate biosynthesis; chorismate from D-erythrose 4-phosphate and phosphoenolpyruvate: step 7/7. Functionally, catalyzes the anti-1,4-elimination of the C-3 phosphate and the C-6 proR hydrogen from 5-enolpyruvylshikimate-3-phosphate (EPSP) to yield chorismate, which is the branch point compound that serves as the starting substrate for the three terminal pathways of aromatic amino acid biosynthesis. This reaction introduces a second double bond into the aromatic ring system. The sequence is that of Chorismate synthase from Koribacter versatilis (strain Ellin345).